Reading from the N-terminus, the 631-residue chain is Acurin A biosynthesis cluster transcription regulator (631 aa).

Residues 1–11 (MSPNMSLTASH) are compositionally biased toward polar residues. The tract at residues 1–28 (MSPNMSLTASHPQQPQPTPQSKAQLTRQ) is disordered. Positions 30–62 (CNRCHASKLKCLRPPGVTTSKSCIRCIKADTEC) form a DNA-binding region, zn(2)-C6 fungal-type. Disordered regions lie at residues 64–141 (YDPP…PDNR), 489–522 (CSSSASTSSTASTTSCSTRAPPSSATGGAHHPAT), and 536–573 (HSSSDHLFSQPEGRGYAPYNHAFHPPPPSRHTHNYPTP). Residues 88-99 (IEAREPEVTDPR) show a composition bias toward basic and acidic residues. The span at 119–128 (NGSLAPSSAA) shows a compositional bias: polar residues.

Its subcellular location is the nucleus. In terms of biological role, transcription factor that positively regulates the expression of the cluster that mediates the biosynthesis of acurin A, a highly reduced polyketide coupled to a serine via a peptide bond. The protein is Acurin A biosynthesis cluster transcription regulator of Aspergillus aculeatus (strain ATCC 16872 / CBS 172.66 / WB 5094).